Reading from the N-terminus, the 181-residue chain is MENTQENPASQSAEENGSETQAAQDAAPAAEAADAALAEAQAKVAELQESYLRAKAETENVRRRAQEDVAKAHKFAIESFAEHLLPVLDSLEAAVGDTSGDIAKVREGVELTLRQLTSALEKGRVVAINPVGEKFDPHRHQAISMVPADQEPNTVVTVLQKGYTIADRVLRPALVTVAQPK.

The segment covering 1-20 (MENTQENPASQSAEENGSET) has biased composition (polar residues). The interval 1-39 (MENTQENPASQSAEENGSETQAAQDAAPAAEAADAALAE) is disordered. Low complexity predominate over residues 21–39 (QAAQDAAPAAEAADAALAE).

The protein belongs to the GrpE family. Homodimer.

Its subcellular location is the cytoplasm. Participates actively in the response to hyperosmotic and heat shock by preventing the aggregation of stress-denatured proteins, in association with DnaK and GrpE. It is the nucleotide exchange factor for DnaK and may function as a thermosensor. Unfolded proteins bind initially to DnaJ; upon interaction with the DnaJ-bound protein, DnaK hydrolyzes its bound ATP, resulting in the formation of a stable complex. GrpE releases ADP from DnaK; ATP binding to DnaK triggers the release of the substrate protein, thus completing the reaction cycle. Several rounds of ATP-dependent interactions between DnaJ, DnaK and GrpE are required for fully efficient folding. This chain is Protein GrpE, found in Burkholderia multivorans (strain ATCC 17616 / 249).